Here is a 217-residue protein sequence, read N- to C-terminus: MQPEFWHKKWESNQIGFHQLEVNPYLQRHWPDLAIPVQARVLVPLCGKSLDLLWLAGRGHQVLGVELSEKAVEDFFHEQQLQPQVSEQGDFKVYRADAVELWCGDFFSLTMADVAGCTALYDRAAVIALPPAMRERYAAHLQSILPACRGLLVTLDYDQSQMPGPPFSVDDAEVQRLLGSVWRVEMLEQQDVLGDSWKFVQAGVTRLEERVYRIRGV.

S-adenosyl-L-methionine is bound by residues tryptophan 10, leucine 45, glutamate 66, and arginine 123.

This sequence belongs to the class I-like SAM-binding methyltransferase superfamily. TPMT family.

The protein resides in the cytoplasm. The catalysed reaction is S-adenosyl-L-methionine + a thiopurine = S-adenosyl-L-homocysteine + a thiopurine S-methylether.. This Pseudomonas fluorescens (strain Pf0-1) protein is Thiopurine S-methyltransferase.